The following is a 4923-amino-acid chain: Bridge-like lipid transfer protein family member 1 (4923 aa).

A helical membrane pass occupies residues 25-45 (FVWLLVATIMSCGWIIYLTYY). Disordered regions lie at residues 160-179 (NRDEEKGREQRDKSLESVHI), 606-631 (HSKSPPDNNMPAEGQGAPPKNSKPRW), 1203-1277 (SLHV…SARL), 1300-1334 (FSSEVSRSDENVLDSPRQRRSYGSFPFTPSADSST), 1357-1400 (TEEF…SVEG), 1471-1494 (TNKRTSKSSLHRPLDLDTPTSEES), 1630-1660 (SAAKQEHKISKTEGTTPGSLSTPHGQTDLSI), 1878-1948 (RDGV…PDSS), 2191-2235 (SKSH…LQCN), 2262-2281 (PHRANEQTATKSSSLTRTGN), 2355-2375 (NTLDTHSQHSHSQHSTSQEDL), 2550-2655 (RYTA…SEQS), 2885-2910 (IRQPSNTPPPNREDTPTPQPSEVSIN), 3564-3596 (YSNSRSKSISAAGRPPMKRSDRPREDLPDIKVE), 3645-3695 (FSPT…RKSA), 3739-3797 (LHPS…SLQS), 3848-3884 (GMRDAPTPAPAPAASGPGKTNTLLSPPPPPLPSAKGK), 4017-4071 (PTSA…TGPP), 4102-4124 (AVTGLPPGPGPLGSVEDEASSVT), 4249-4309 (DGQT…AAAQ), and 4797-4827 (RMFASRPGQKSPTTQQDEPSSDKKEEREKEE). The span at 1210 to 1226 (SHSSASSSEENSSSSAA) shows a compositional bias: low complexity. Over residues 1237–1248 (PSPSTELMNVTT) the composition is skewed to polar residues. The segment covering 1260-1271 (SPLRSPLKRQSS) has biased composition (low complexity). Positions 1641–1658 (TEGTTPGSLSTPHGQTDL) are enriched in polar residues. Residues 1887–1898 (SSGSQTGSGYST) show a composition bias toward low complexity. Residues 1907 to 1920 (NDAQSPASEPNNNS) show a composition bias toward polar residues. Positions 1921-1931 (DSDEQDEGVES) are enriched in acidic residues. 2 stretches are compositionally biased toward polar residues: residues 2208–2218 (PYQSLSYTSGD) and 2267–2281 (EQTATKSSSLTRTGN). Residues 2550-2560 (RYTAGSSSPTP) are compositionally biased toward polar residues. Residues 2606–2624 (TRSREPRGRGTLGRSERRT) show a composition bias toward basic and acidic residues. Over residues 3581 to 3595 (KRSDRPREDLPDIKV) the composition is skewed to basic and acidic residues. Residues 3746–3770 (TEHEDLALRRSCERSSRSLDQDSPP) are compositionally biased toward basic and acidic residues. Polar residues predominate over residues 4017–4039 (PTSATYPSEGQHTPSSTPPSVHN). The span at 4044–4056 (PGGPSTGLGSPLG) shows a compositional bias: low complexity. Polar residues-rich tracts occupy residues 4249-4268 (DGQTTQHPSSSVFTDTTPSH), 4276-4286 (TGRTRSVSDSS), and 4804-4814 (GQKSPTTQQDE). The segment covering 4816–4827 (SSDKKEEREKEE) has biased composition (basic and acidic residues).

Its subcellular location is the cell membrane. The protein localises to the endoplasmic reticulum membrane. The protein resides in the mitochondrion membrane. In terms of biological role, tube-forming lipid transport protein which provides phosphatidylethanolamine for glycosylphosphatidylinositol (GPI) anchor synthesis in the endoplasmic reticulum. Plays a role in endosomal trafficking and endosome recycling. Also involved in the actin cytoskeleton and cilia structural dynamics. Acts as a regulator of phagocytosis. In Danio rerio (Zebrafish), this protein is Bridge-like lipid transfer protein family member 1 (bltp1).